The sequence spans 480 residues: MKYNLNQLFKNHRIKGLSTNSKTVKEDEVFFAIKGQNVDGNDFINDALNNGAVLVITENKNNTAIDKVIYVEDVHKALYEAIEIFYPKKPKNLISVTGTNGKSSVVSYIAQAYSLLKKKAAFIGTIGLEIFGSNNIINDVPSLTTFDYLSFRKVAHNLAEDSIEYLAFEASSHGLEQGRLGKTKVNIVSFTSFSQDHLDYHHTKENYLLAKLKLFTDHLLPSGIAILNSDIEEIEFVKDYLHNNNVKFITVGKKGDLQITKITCSLTGQNIDFIFNNIIYNLHTLIIGSFQASNLLIAALTLYYTGFKFDEIIEALAKVKPIKGRMERIDGTNIFVDYSHTPDSLEKALIELKNIKLHGSKLSVIFGCGGDRDKTKRALMGQIAAKLADNVIITDDNPRFEDPKLIRAEIIRGIGTATYTEIASRAEAIKYGINNLKQDDILLIAGKGHETYQIIGDKKLPFDDSEVVRKYLFEISYTRN.

Ser21 is a UDP-N-acetyl-alpha-D-muramoyl-L-alanyl-D-glutamate binding site. ATP is bound at residue 98 to 104; sequence GTNGKSS. UDP-N-acetyl-alpha-D-muramoyl-L-alanyl-D-glutamate contacts are provided by residues 144–145, Ser171, Gln177, and Arg179; that span reads TT. Position 211 is an N6-carboxylysine (Lys211). Residues Arg372, 396-399, Gly446, and Glu450 contribute to the meso-2,6-diaminopimelate site; that span reads DNPR. Residues 396 to 399 carry the Meso-diaminopimelate recognition motif motif; sequence DNPR.

The protein belongs to the MurCDEF family. MurE subfamily. Requires Mg(2+) as cofactor. In terms of processing, carboxylation is probably crucial for Mg(2+) binding and, consequently, for the gamma-phosphate positioning of ATP.

The protein localises to the cytoplasm. It catalyses the reaction UDP-N-acetyl-alpha-D-muramoyl-L-alanyl-D-glutamate + meso-2,6-diaminopimelate + ATP = UDP-N-acetyl-alpha-D-muramoyl-L-alanyl-gamma-D-glutamyl-meso-2,6-diaminopimelate + ADP + phosphate + H(+). Its pathway is cell wall biogenesis; peptidoglycan biosynthesis. In terms of biological role, catalyzes the addition of meso-diaminopimelic acid to the nucleotide precursor UDP-N-acetylmuramoyl-L-alanyl-D-glutamate (UMAG) in the biosynthesis of bacterial cell-wall peptidoglycan. The polypeptide is UDP-N-acetylmuramoyl-L-alanyl-D-glutamate--2,6-diaminopimelate ligase (Rickettsia prowazekii (strain Madrid E)).